We begin with the raw amino-acid sequence, 522 residues long: Putative cysteine ligase BshC (522 aa).

Residues 436-469 (SWAQAEKAKALKQLEDIEKKLRKAEERKHDDVIK) adopt a coiled-coil conformation.

It belongs to the BshC family.

The sequence is that of Putative cysteine ligase BshC from Cytophaga hutchinsonii (strain ATCC 33406 / DSM 1761 / CIP 103989 / NBRC 15051 / NCIMB 9469 / D465).